Reading from the N-terminus, the 26-residue chain is Aldehyde dehydrogenase beta chain (26 aa).

Heterotrimer composed of an alpha, a beta and a gamma chain. The cofactor is FAD.

The enzyme catalyses an aldehyde + a quinone + H2O = a quinol + a carboxylate + H(+). This is Aldehyde dehydrogenase beta chain from Amycolatopsis methanolica.